The sequence spans 282 residues: Transcription repressor MYB4 (282 aa).

HTH myb-type domains follow at residues 9–61 (KAHT…INYL) and 62–116 (RPDL…RRKL). 2 consecutive DNA-binding regions (H-T-H motif) follow at residues 37–61 (WRSL…INYL) and 89–112 (WSLI…NTHI). A disordered region spans residues 119-145 (RGIDPTSHRPIQESSASQDSKPTQLEP). Polar residues predominate over residues 130-145 (QESSASQDSKPTQLEP).

Interacts with BHLH12/MYC1 and BHLH42/TT8. Interacts with SAD2. Widely expressed at low level. Highly expressed in siliques. Weakly expressed in seedlings, young and mature leaves, cauline leaves, stems, flower buds and roots.

Its subcellular location is the nucleus. Its function is as follows. Transcription repressor involved in regulation of protection against UV. Mediates transcriptional repression of CYP73A5, the gene encoding trans-cinnamate 4-monooxygenase, thereby regulating the accumulation of the UV-protectant compound sinapoylmalate. The polypeptide is Transcription repressor MYB4 (MYB4) (Arabidopsis thaliana (Mouse-ear cress)).